An 862-amino-acid chain; its full sequence is Probable glutaminase ARB_05535/05536 (862 aa).

A signal peptide spans 1–19 (MLSWVLLAWAVACSALAGA). 7 N-linked (GlcNAc...) asparagine glycosylation sites follow: Asn106, Asn273, Asn436, Asn448, Asn486, Asn610, and Asn744. Positions 798–862 (FLDDKDNNSP…SQMTIVNEND (65 aa)) are disordered. The span at 853–862 (SQMTIVNEND) shows a compositional bias: polar residues.

This sequence belongs to the fungal glutaminase gtaA family.

Its subcellular location is the secreted. It catalyses the reaction L-glutamine + H2O = L-glutamate + NH4(+). Its function is as follows. Glutaminase catalyzes the hydrolysis of glutamine to glutamic acid and plays a key role in nitrogen metabolism. This is Probable glutaminase ARB_05535/05536 from Arthroderma benhamiae (strain ATCC MYA-4681 / CBS 112371) (Trichophyton mentagrophytes).